The chain runs to 420 residues: DNA replication and repair protein RecF (420 aa).

An ATP-binding site is contributed by 30-37; it reads GRNGQGKT. The tract at residues 175–214 is disordered; sequence RKGGFARKGGFAPLGPPEGRPEGPPEGRTGGSATSGPPSR.

The protein belongs to the RecF family.

The protein localises to the cytoplasm. In terms of biological role, the RecF protein is involved in DNA metabolism; it is required for DNA replication and normal SOS inducibility. RecF binds preferentially to single-stranded, linear DNA. It also seems to bind ATP. The chain is DNA replication and repair protein RecF from Nocardioides sp. (strain ATCC BAA-499 / JS614).